Reading from the N-terminus, the 188-residue chain is ADP-ribosylation factor K (188 aa).

Residues 34–40 (DGAGKST), 75–79 (DVGGQ), and 134–137 (NKQD) each bind GTP.

It belongs to the small GTPase superfamily. Arf family.

The protein resides in the golgi apparatus. GTP-binding protein that may be involved in protein trafficking. May modulate vesicle budding and uncoating within the Golgi apparatus. This chain is ADP-ribosylation factor K (arrK), found in Dictyostelium discoideum (Social amoeba).